A 137-amino-acid chain; its full sequence is Basic phospholipase A2 3 (137 aa).

An N-terminal signal peptide occupies residues 1–11 (LVAVCVSLLGA). The propeptide occupies 12–19 (ANIPPQPL). Cystine bridges form between Cys-30-Cys-89, Cys-44-Cys-136, Cys-46-Cys-62, Cys-61-Cys-117, Cys-68-Cys-110, Cys-78-Cys-103, and Cys-96-Cys-108. Ca(2+)-binding residues include Tyr-45, Gly-47, and Gly-49. Residue His-65 is part of the active site. Asp-66 contacts Ca(2+). Residue Asp-111 is part of the active site.

It belongs to the phospholipase A2 family. Group I subfamily. D49 sub-subfamily. As to quaternary structure, monomer, or homotrimer. Was firstly described as a trimer, but has been reinterpreted with the possibility of being a monomer. Requires Ca(2+) as cofactor. As to expression, expressed by the venom gland.

It is found in the secreted. The catalysed reaction is a 1,2-diacyl-sn-glycero-3-phosphocholine + H2O = a 1-acyl-sn-glycero-3-phosphocholine + a fatty acid + H(+). Functionally, snake venom phospholipase A2 (PLA2) that shows anticoagulant and neurotoxic activities. PLA2 catalyzes the calcium-dependent hydrolysis of the 2-acyl groups in 3-sn-phosphoglycerides. The polypeptide is Basic phospholipase A2 3 (Bungarus caeruleus (Indian krait)).